The sequence spans 202 residues: Holliday junction branch migration complex subunit RuvA (202 aa).

Residues 1–62 (MIGYLRGRLH…EDAMELYGFT (62 aa)) form a domain I region. The interval 63–141 (RPEELHLFTL…KSGLVDGTET (79 aa)) is domain II. A flexible linker region spans residues 141 to 145 (TEAIP). A domain III region spans residues 146-202 (AGGGDNDEALAALLALGYSREEIGPILARVRQELGNAAPTTAVLQAVLKTFGRGGGD).

It belongs to the RuvA family. In terms of assembly, homotetramer. Forms an RuvA(8)-RuvB(12)-Holliday junction (HJ) complex. HJ DNA is sandwiched between 2 RuvA tetramers; dsDNA enters through RuvA and exits via RuvB. An RuvB hexamer assembles on each DNA strand where it exits the tetramer. Each RuvB hexamer is contacted by two RuvA subunits (via domain III) on 2 adjacent RuvB subunits; this complex drives branch migration. In the full resolvosome a probable DNA-RuvA(4)-RuvB(12)-RuvC(2) complex forms which resolves the HJ.

It localises to the cytoplasm. Functionally, the RuvA-RuvB-RuvC complex processes Holliday junction (HJ) DNA during genetic recombination and DNA repair, while the RuvA-RuvB complex plays an important role in the rescue of blocked DNA replication forks via replication fork reversal (RFR). RuvA specifically binds to HJ cruciform DNA, conferring on it an open structure. The RuvB hexamer acts as an ATP-dependent pump, pulling dsDNA into and through the RuvAB complex. HJ branch migration allows RuvC to scan DNA until it finds its consensus sequence, where it cleaves and resolves the cruciform DNA. The chain is Holliday junction branch migration complex subunit RuvA from Moorella thermoacetica (strain ATCC 39073 / JCM 9320).